A 137-amino-acid polypeptide reads, in one-letter code: Translation initiation factor 2 subunit beta (137 aa).

This sequence belongs to the eIF-2-beta/eIF-5 family. As to quaternary structure, heterotrimer composed of an alpha, a beta and a gamma chain.

Functionally, eIF-2 functions in the early steps of protein synthesis by forming a ternary complex with GTP and initiator tRNA. The chain is Translation initiation factor 2 subunit beta (eif2b) from Archaeoglobus fulgidus (strain ATCC 49558 / DSM 4304 / JCM 9628 / NBRC 100126 / VC-16).